The primary structure comprises 362 residues: Methylthioribose-1-phosphate isomerase (362 aa).

Residues Arg53–Ala55, Arg90, and Gln201 contribute to the substrate site. The active-site Proton donor is the Asp242. Asn252–Lys253 lines the substrate pocket.

The protein belongs to the eIF-2B alpha/beta/delta subunits family. MtnA subfamily.

The enzyme catalyses 5-(methylsulfanyl)-alpha-D-ribose 1-phosphate = 5-(methylsulfanyl)-D-ribulose 1-phosphate. Its pathway is amino-acid biosynthesis; L-methionine biosynthesis via salvage pathway; L-methionine from S-methyl-5-thio-alpha-D-ribose 1-phosphate: step 1/6. Its function is as follows. Catalyzes the interconversion of methylthioribose-1-phosphate (MTR-1-P) into methylthioribulose-1-phosphate (MTRu-1-P). The sequence is that of Methylthioribose-1-phosphate isomerase from Paramagnetospirillum magneticum (strain ATCC 700264 / AMB-1) (Magnetospirillum magneticum).